The following is a 270-amino-acid chain: Putative protein-disulfide oxidoreductase RT0103 (270 aa).

Positions M1–A17 are cleaved as a signal peptide. The Thioredoxin domain occupies S71 to E264. A disulfide bond links C117 and C120.

This sequence belongs to the thioredoxin family. DsbA subfamily.

The protein resides in the periplasm. In terms of biological role, may be required for disulfide bond formation in some proteins. The polypeptide is Putative protein-disulfide oxidoreductase RT0103 (Rickettsia typhi (strain ATCC VR-144 / Wilmington)).